The following is a 356-amino-acid chain: Cyclin-D4-1 (356 aa).

The protein belongs to the cyclin family. Cyclin D subfamily.

In Oryza sativa subsp. japonica (Rice), this protein is Cyclin-D4-1 (CYCD4-1).